We begin with the raw amino-acid sequence, 330 residues long: Virulence plasmid integrase pGP8-D (330 aa).

The 86-residue stretch at 39-124 (FSLFEVIMHW…SYISLTRFLN (86 aa)) folds into the Core-binding (CB) domain. The 176-residue stretch at 152 to 327 (VKTDAMNSLQ…SREDNASKKM (176 aa)) folds into the Tyr recombinase domain. Active-site residues include Arg189, Lys214, His279, Arg282, and His305. Tyr314 functions as the O-(3'-phospho-DNA)-tyrosine intermediate in the catalytic mechanism.

Belongs to the 'phage' integrase family.

The chain is Virulence plasmid integrase pGP8-D from Chlamydia trachomatis serovar L2 (strain ATCC VR-902B / DSM 19102 / 434/Bu).